The following is a 464-amino-acid chain: Pup--protein ligase (464 aa).

Glu-14 is a binding site for Mg(2+). Residue Arg-58 coordinates ATP. Residue Tyr-60 coordinates Mg(2+). Asp-62 (proton acceptor) is an active-site residue. Residue Glu-68 coordinates Mg(2+). ATP is bound by residues Thr-71 and Trp-430.

Belongs to the Pup ligase/Pup deamidase family. Pup-conjugating enzyme subfamily.

It catalyses the reaction ATP + [prokaryotic ubiquitin-like protein]-L-glutamate + [protein]-L-lysine = ADP + phosphate + N(6)-([prokaryotic ubiquitin-like protein]-gamma-L-glutamyl)-[protein]-L-lysine.. It participates in protein degradation; proteasomal Pup-dependent pathway. Its pathway is protein modification; protein pupylation. Functionally, catalyzes the covalent attachment of the prokaryotic ubiquitin-like protein modifier Pup to the proteasomal substrate proteins, thereby targeting them for proteasomal degradation. This tagging system is termed pupylation. The ligation reaction involves the side-chain carboxylate of the C-terminal glutamate of Pup and the side-chain amino group of a substrate lysine. The protein is Pup--protein ligase of Micrococcus luteus (strain ATCC 4698 / DSM 20030 / JCM 1464 / CCM 169 / CCUG 5858 / IAM 1056 / NBRC 3333 / NCIMB 9278 / NCTC 2665 / VKM Ac-2230) (Micrococcus lysodeikticus).